The primary structure comprises 1182 residues: uncharacterized protein (1182 aa).

A helical membrane pass occupies residues 618 to 638 (GSSSLVCSVMVVIFSIILYYL).

It localises to the host membrane. This is an uncharacterized protein from Callospermophilus lateralis (Golden-mantled ground squirrel).